The sequence spans 1659 residues: Daxx-like protein (1659 aa).

Disordered regions lie at residues 1 to 25 and 265 to 336; these read MSAS…RRRL and QLQQ…VRSL. Residues 438 to 469 are a coiled coil; that stretch reads LGQLQQEQQKILGQLQQQKQQQQQQQKKILGQ. Low complexity-rich tracts occupy residues 506–520, 528–542, and 600–625; these read SVGQ…QSQQ, KQQP…VGQF, and GQLQ…QQQQ. Disordered regions lie at residues 506–542, 600–645, 658–713, 872–894, 924–952, 1023–1060, and 1536–1555; these read SVGQ…VGQF, GQLQ…TLAG, SAGQ…MPQK, TLPF…HVQG, LPPT…VQQQ, VESP…QSRA, and FKIA…EDDD. Residues 626–635 show a composition bias toward polar residues; that stretch reads KISAGQLQEH. 2 stretches are compositionally biased toward low complexity: residues 636–645 and 658–698; these read SQQQQKTLAG and SAGQ…QPQQ. Composition is skewed to polar residues over residues 699-711 and 885-894; these read RTSA…QQMP and APMTSTHVQG. Residues 870–1659 are necessary for interaction with His3.3A and His3.3B; the sequence is ARTLPFRSSQ…DQIIISDEES (790 aa). The segment covering 924 to 937 has biased composition (low complexity); sequence LPPTTSITPQLTPT. Positions 1541-1555 are enriched in acidic residues; sequence DGDDSEEESDSEDDD.

As to quaternary structure, interacts with p53 (via C-terminus). Interacts (via C-terminus) with His3.3A and His3.3B. Interacts with asf1. As to expression, ubiquitously expressed with higher levels in the head (at protein level). Expressed in the germ line, with prominent expression in primary spermatocytes and meiotic spermatocytes (at protein level). In ovaries, expressed in nurse cells and in the germinal vesicle of the ovarian follicle at stage 10 (at protein level).

Its subcellular location is the cytoplasm. It is found in the cytosol. The protein resides in the nucleus. The protein localises to the chromosome. Functionally, transcription regulator. Acts as a histone chaperone that facilitates deposition of histone H3.3. Has a role in chromatin remodeling together with asf1 and XNP. Has role in the transcriptional apoptotic response to oxidative and UV stress. This chain is Daxx-like protein, found in Drosophila melanogaster (Fruit fly).